A 185-amino-acid polypeptide reads, in one-letter code: Ribosome-recycling factor (185 aa).

The tract at residues Arg-141 to Leu-160 is disordered.

The protein belongs to the RRF family.

It is found in the cytoplasm. Responsible for the release of ribosomes from messenger RNA at the termination of protein biosynthesis. May increase the efficiency of translation by recycling ribosomes from one round of translation to another. This Rhodococcus jostii (strain RHA1) protein is Ribosome-recycling factor.